The sequence spans 308 residues: Ribosomal RNA small subunit methyltransferase H (308 aa).

Residues 31 to 33 (GGH), D51, F75, D97, and Q104 contribute to the S-adenosyl-L-methionine site.

The protein belongs to the methyltransferase superfamily. RsmH family.

The protein resides in the cytoplasm. The catalysed reaction is cytidine(1402) in 16S rRNA + S-adenosyl-L-methionine = N(4)-methylcytidine(1402) in 16S rRNA + S-adenosyl-L-homocysteine + H(+). Specifically methylates the N4 position of cytidine in position 1402 (C1402) of 16S rRNA. The protein is Ribosomal RNA small subunit methyltransferase H of Tolumonas auensis (strain DSM 9187 / NBRC 110442 / TA 4).